We begin with the raw amino-acid sequence, 425 residues long: COBRA-like protein 4 (425 aa).

The N-terminal stretch at 1 to 27 (MAIGVGGCCAVLLAAALLFSSPATTYA) is a signal peptide. Asparagine 36, asparagine 163, asparagine 171, asparagine 319, and asparagine 352 each carry an N-linked (GlcNAc...) asparagine glycan.

This sequence belongs to the COBRA family.

This chain is COBRA-like protein 4 (BC1L9), found in Oryza sativa subsp. japonica (Rice).